Here is a 365-residue protein sequence, read N- to C-terminus: UDP-N-acetylglucosamine--N-acetylmuramyl-(pentapeptide) pyrophosphoryl-undecaprenol N-acetylglucosamine transferase (365 aa).

UDP-N-acetyl-alpha-D-glucosamine is bound by residues 17-19, N129, R167, S194, I250, 269-274, and Q295; these read TGG and ALTVSE.

Belongs to the glycosyltransferase 28 family. MurG subfamily.

It localises to the cell inner membrane. The enzyme catalyses di-trans,octa-cis-undecaprenyl diphospho-N-acetyl-alpha-D-muramoyl-L-alanyl-D-glutamyl-meso-2,6-diaminopimeloyl-D-alanyl-D-alanine + UDP-N-acetyl-alpha-D-glucosamine = di-trans,octa-cis-undecaprenyl diphospho-[N-acetyl-alpha-D-glucosaminyl-(1-&gt;4)]-N-acetyl-alpha-D-muramoyl-L-alanyl-D-glutamyl-meso-2,6-diaminopimeloyl-D-alanyl-D-alanine + UDP + H(+). The protein operates within cell wall biogenesis; peptidoglycan biosynthesis. In terms of biological role, cell wall formation. Catalyzes the transfer of a GlcNAc subunit on undecaprenyl-pyrophosphoryl-MurNAc-pentapeptide (lipid intermediate I) to form undecaprenyl-pyrophosphoryl-MurNAc-(pentapeptide)GlcNAc (lipid intermediate II). In Shewanella piezotolerans (strain WP3 / JCM 13877), this protein is UDP-N-acetylglucosamine--N-acetylmuramyl-(pentapeptide) pyrophosphoryl-undecaprenol N-acetylglucosamine transferase.